Here is a 269-residue protein sequence, read N- to C-terminus: Eukaryotic translation initiation factor 3 subunit G (269 aa).

A disordered region spans residues 140 to 181 (AIGGGDMSAQGGSGSGRYVPPSLRAGARDPSSNAYQDQRERD). Gly residues predominate over residues 141–154 (IGGGDMSAQGGSGS). The residue at position 161 (S161) is a Phosphoserine. In terms of domain architecture, RRM spans 184–263 (KTIRLTQVNE…FMLHAEWSKP (80 aa)).

Belongs to the eIF-3 subunit G family. As to quaternary structure, component of the eukaryotic translation initiation factor 3 (eIF-3) complex.

The protein resides in the cytoplasm. In terms of biological role, RNA-binding component of the eukaryotic translation initiation factor 3 (eIF-3) complex, which is involved in protein synthesis of a specialized repertoire of mRNAs and, together with other initiation factors, stimulates binding of mRNA and methionyl-tRNAi to the 40S ribosome. The eIF-3 complex specifically targets and initiates translation of a subset of mRNAs involved in cell proliferation. This subunit can bind 18S rRNA. The protein is Eukaryotic translation initiation factor 3 subunit G of Kluyveromyces lactis (strain ATCC 8585 / CBS 2359 / DSM 70799 / NBRC 1267 / NRRL Y-1140 / WM37) (Yeast).